A 596-amino-acid chain; its full sequence is Meiosis-specific protein ASY1 (596 aa).

Residues 15 to 228 (QDSLLLTRNL…SKHLVLTLKV (214 aa)) enclose the HORMA domain. The interval 235–303 (CEDENDDMQD…NTQDPAENEQ (69 aa)) is disordered. The segment covering 282–295 (QDDDDGEVDEDDNT) has biased composition (acidic residues). In terms of domain architecture, SWIRM spans 351-449 (SKTGKDMYIK…ASSNRRLGKR (99 aa)). The segment at 562 to 596 (TVNCSQASQDRRGRKTSMVREPILQYSKRQKSQAN) is disordered.

Interacts with ASY3.

It localises to the chromosome. It is found in the nucleus. Required for normal meiosis in male and female gametophytes. Plays a crucial role in coordinating the activity of DMC1, a key member of the homologous recombination machinery. Acts at the interface between the developing chromosome axes and the recombination machinery to ensure DMC1-mediated interhomolog recombination. The sequence is that of Meiosis-specific protein ASY1 from Arabidopsis thaliana (Mouse-ear cress).